The primary structure comprises 156 residues: MNVIKGVVAAPNARVAIAIARFNNFINDSLLEGAVDALERIGQVSSENITVVWVPGAYELPLTVKALVESDKYDAVIALGTVIRGGTAHFEYVAGECSSGLSHVAMQSEIPVTFGVLTTESIEQAIERAGTKAGNKGAEAAMTALEMINVLKAIKG.

Residues phenylalanine 22, 57 to 59 (AYE), and 81 to 83 (TVI) each bind 5-amino-6-(D-ribitylamino)uracil. 86–87 (GT) serves as a coordination point for (2S)-2-hydroxy-3-oxobutyl phosphate. The active-site Proton donor is the histidine 89. Phenylalanine 114 is a binding site for 5-amino-6-(D-ribitylamino)uracil. Arginine 128 provides a ligand contact to (2S)-2-hydroxy-3-oxobutyl phosphate.

Belongs to the DMRL synthase family. As to quaternary structure, forms an icosahedral capsid composed of 60 subunits, arranged as a dodecamer of pentamers.

It catalyses the reaction (2S)-2-hydroxy-3-oxobutyl phosphate + 5-amino-6-(D-ribitylamino)uracil = 6,7-dimethyl-8-(1-D-ribityl)lumazine + phosphate + 2 H2O + H(+). The protein operates within cofactor biosynthesis; riboflavin biosynthesis; riboflavin from 2-hydroxy-3-oxobutyl phosphate and 5-amino-6-(D-ribitylamino)uracil: step 1/2. Its function is as follows. Catalyzes the formation of 6,7-dimethyl-8-ribityllumazine by condensation of 5-amino-6-(D-ribitylamino)uracil with 3,4-dihydroxy-2-butanone 4-phosphate. This is the penultimate step in the biosynthesis of riboflavin. The sequence is that of 6,7-dimethyl-8-ribityllumazine synthase from Proteus mirabilis (strain HI4320).